A 367-amino-acid polypeptide reads, in one-letter code: Isocitrate dehydrogenase [NAD] regulatory subunit 2, mitochondrial (367 aa).

The transit peptide at Met-1–Ser-25 directs the protein to the mitochondrion.

Belongs to the isocitrate and isopropylmalate dehydrogenases family. As to quaternary structure, heterooligomer of catalytic and regulatory subunits. Ubiquitous. Predominantly expressed in roots, stems and leaves.

It localises to the mitochondrion. Functionally, performs an essential role in the oxidative function of the citric acid cycle. The polypeptide is Isocitrate dehydrogenase [NAD] regulatory subunit 2, mitochondrial (IDH2) (Arabidopsis thaliana (Mouse-ear cress)).